A 1088-amino-acid polypeptide reads, in one-letter code: Tyrocidine synthase 1 (1088 aa).

The 75-residue stretch at 528-602 folds into the Carrier domain; sequence PPRTETESIL…QVALFVKSTT (75 aa). Ser563 carries the O-(pantetheine 4'-phosphoryl)serine modification.

Belongs to the ATP-dependent AMP-binding enzyme family. Large multienzyme complex of TycA, TycB and TycC. It depends on pantetheine 4'-phosphate as a cofactor.

It carries out the reaction L-phenylalanine + ATP + H2O = D-phenylalanine + AMP + diphosphate + H(+). The protein operates within antibiotic biosynthesis; tyrocidine biosynthesis. In terms of biological role, in the first step of peptide synthesis this enzyme activates phenylalanine and racemizes it to the D-isomer. The polypeptide is Tyrocidine synthase 1 (tycA) (Brevibacillus parabrevis).